The sequence spans 503 residues: Maturase K (503 aa).

This sequence belongs to the intron maturase 2 family. MatK subfamily.

It localises to the plastid. The protein localises to the chloroplast. Usually encoded in the trnK tRNA gene intron. Probably assists in splicing its own and other chloroplast group II introns. This Diospyros virginiana (American persimmon) protein is Maturase K.